Reading from the N-terminus, the 306-residue chain is Pentalenolactone F synthase (306 aa).

Fe cation contacts are provided by histidine 110 and aspartate 112. Residues threonine 138 and tryptophan 258 each contribute to the 2-oxoglutarate site. Residue histidine 273 coordinates Fe cation. Arginine 284 serves as a coordination point for 2-oxoglutarate.

This sequence belongs to the TfdA dioxygenase family. It depends on Fe(2+) as a cofactor.

It carries out the reaction pentalenolactone D + 2 2-oxoglutarate + 2 O2 = pentalenolactone F + 2 succinate + 2 CO2 + H2O. It participates in antibiotic biosynthesis; neopentalenolactone biosynthesis. Its activity is regulated as follows. Activated by ascorbate. Functionally, catalyzes the Fe(2+) and alpha-ketoglutarate-dependent oxidation of pentalenolactone D to pentalenolactone F. Also able to catalyze the oxidation of pentalenolactone D to pentalenolactone E. In presence of neopentalenolactone D, mediates production of PL308 and possibly neopentalenolactone E. In Streptomyces avermitilis (strain ATCC 31267 / DSM 46492 / JCM 5070 / NBRC 14893 / NCIMB 12804 / NRRL 8165 / MA-4680), this protein is Pentalenolactone F synthase (ptlD).